The following is a 346-amino-acid chain: tRNA(Ile)-lysidine synthase (346 aa).

32 to 37 provides a ligand contact to ATP; it reads SGGPDS.

This sequence belongs to the tRNA(Ile)-lysidine synthase family.

It is found in the cytoplasm. The catalysed reaction is cytidine(34) in tRNA(Ile2) + L-lysine + ATP = lysidine(34) in tRNA(Ile2) + AMP + diphosphate + H(+). In terms of biological role, ligates lysine onto the cytidine present at position 34 of the AUA codon-specific tRNA(Ile) that contains the anticodon CAU, in an ATP-dependent manner. Cytidine is converted to lysidine, thus changing the amino acid specificity of the tRNA from methionine to isoleucine. In Rhodopseudomonas palustris (strain ATCC BAA-98 / CGA009), this protein is tRNA(Ile)-lysidine synthase.